A 269-amino-acid polypeptide reads, in one-letter code: CCAAT/enhancer-binding protein delta (269 aa).

Disordered regions lie at residues 1-48 (MSAA…PGAA), 97-133 (PLELLPGGPARPLGPGPAAPRLLKREPDWGDGDAPGS), and 151-219 (AAGQ…NQEM). Serine 2 is subject to N-acetylserine. Composition is skewed to low complexity over residues 36–48 (GAEPGALGEPGAA) and 97–107 (PLELLPGGPAR). A Glycyl lysine isopeptide (Lys-Gly) (interchain with G-Cter in SUMO) cross-link involves residue lysine 120. Residues 155–175 (PTPPTSPEPPRSSPRQTPAPG) are compositionally biased toward pro residues. The segment covering 177 to 201 (AREKSAGKRGPDRGSPEYRQRRERN) has biased composition (basic and acidic residues). The bZIP domain occupies 191 to 254 (SPEYRQRRER…AGLRQFFKQL (64 aa)). The basic motif stretch occupies residues 195–222 (RQRRERNNIAVRKSRDKAKRRNQEMQQK). The interval 226–254 (LSAENEKLHQRVEQLTRDLAGLRQFFKQL) is leucine-zipper.

The protein belongs to the bZIP family. C/EBP subfamily. In terms of assembly, binds DNA as a homodimer and as a heterodimer. Can form stable heterodimers with CEBPB. Can form stable heterodimers with CEBPA and CEBPE. Directly interacts with SPI1/PU.1; this interaction does not affect DNA-binding properties of each partner. Interacts with PRDM16.

The protein localises to the nucleus. Its function is as follows. Transcription activator that recognizes two different DNA motifs: the CCAAT homology common to many promoters and the enhanced core homology common to many enhancers. Important transcription factor regulating the expression of genes involved in immune and inflammatory responses. Transcriptional activator that enhances IL6 transcription alone and as heterodimer with CEBPB. The chain is CCAAT/enhancer-binding protein delta (CEBPD) from Homo sapiens (Human).